A 388-amino-acid polypeptide reads, in one-letter code: Regulator of G-protein signaling 20 (388 aa).

The interval 138 to 199 is disordered; sequence PGRPSGGRPL…TPGAAPGQPG (62 aa). A compositionally biased stretch (low complexity) spans 185-197; sequence PAAQDTPGAAPGQ. Residues 262–378 form the RGS domain; the sequence is SFDKLMVTPA…MNSAVYKDLL (117 aa).

Forms a complex with G(alpha)z/i2 subunits and mu-opioid receptors; the formation of this complex results in mu-opioid receptor desensitization. Interacts with OPRM1. In terms of processing, fatty acylated. Heavily palmitoylated in the cysteine string motif. N- and O-glycosylated in synapsomal membranes. Post-translationally, serine phosphorylated in synapsomal membranes. In terms of processing, sumoylated with SUMO1 and SUMO2 in synaptosomes. The sumoylated forms act as a scaffold for sequestering mu-opioid receptor-activated G(alpha) subunits. In terms of tissue distribution, isoform 5 is expressed in brain at high levels in the caudate nucleus and temporal lobe.

It localises to the membrane. It is found in the nucleus. Its subcellular location is the cytoplasm. In terms of biological role, inhibits signal transduction by increasing the GTPase activity of G protein alpha subunits thereby driving them into their inactive GDP-bound form. Binds selectively to G(z)-alpha and G(alpha)-i2 subunits, accelerates their GTPase activity and regulates their signaling activities. The G(z)-alpha activity is inhibited by the phosphorylation and palmitoylation of the G-protein. Negatively regulates mu-opioid receptor-mediated activation of the G-proteins. This Homo sapiens (Human) protein is Regulator of G-protein signaling 20 (RGS20).